Here is a 122-residue protein sequence, read N- to C-terminus: Large ribosomal subunit protein uL18 (122 aa).

Positions 1-11 (MLKKPDRNALR) are enriched in basic and acidic residues. Residues 1–22 (MLKKPDRNALRDKRRRRVRKKI) form a disordered region. Positions 12–22 (DKRRRRVRKKI) are enriched in basic residues.

Belongs to the universal ribosomal protein uL18 family. As to quaternary structure, part of the 50S ribosomal subunit; part of the 5S rRNA/L5/L18/L25 subcomplex. Contacts the 5S and 23S rRNAs.

Functionally, this is one of the proteins that bind and probably mediate the attachment of the 5S RNA into the large ribosomal subunit, where it forms part of the central protuberance. The chain is Large ribosomal subunit protein uL18 from Pelotomaculum thermopropionicum (strain DSM 13744 / JCM 10971 / SI).